A 244-amino-acid chain; its full sequence is Uridylate kinase (244 aa).

An ATP-binding site is contributed by 12-15 (KLSG). Residues 20 to 25 (GERGVG) form an involved in allosteric activation by GTP region. Gly54 serves as a coordination point for UMP. Residues Gly55 and Arg59 each contribute to the ATP site. UMP is bound by residues Asp74 and 135 to 142 (IGSPYFST). Residues Asn163, Tyr169, and Asp172 each contribute to the ATP site.

Belongs to the UMP kinase family. Homohexamer.

Its subcellular location is the cytoplasm. The enzyme catalyses UMP + ATP = UDP + ADP. It functions in the pathway pyrimidine metabolism; CTP biosynthesis via de novo pathway; UDP from UMP (UMPK route): step 1/1. Its activity is regulated as follows. Allosterically activated by GTP. Inhibited by UTP. Catalyzes the reversible phosphorylation of UMP to UDP. The protein is Uridylate kinase of Streptococcus suis (strain 98HAH33).